We begin with the raw amino-acid sequence, 201 residues long: Superoxide dismutase [Mn] (201 aa).

His-27, His-81, Asp-163, and His-167 together coordinate Mn(2+).

This sequence belongs to the iron/manganese superoxide dismutase family. Homodimer. Mn(2+) serves as cofactor.

The protein localises to the secreted. The enzyme catalyses 2 superoxide + 2 H(+) = H2O2 + O2. Its function is as follows. Destroys superoxide anion radicals which are normally produced within the cells and which are toxic to biological systems. The protein is Superoxide dismutase [Mn] (sodA) of Streptococcus pyogenes.